The sequence spans 833 residues: Leucine--tRNA ligase (833 aa).

The 'HIGH' region signature appears at 41 to 52 (PYPSGAGLHVGH). The 'KMSKS' region motif lies at 610–614 (KMSKS). Lys-613 is a binding site for ATP.

It belongs to the class-I aminoacyl-tRNA synthetase family.

The protein localises to the cytoplasm. It catalyses the reaction tRNA(Leu) + L-leucine + ATP = L-leucyl-tRNA(Leu) + AMP + diphosphate. This is Leucine--tRNA ligase from Streptococcus pyogenes serotype M2 (strain MGAS10270).